A 292-amino-acid polypeptide reads, in one-letter code: 4-hydroxy-tetrahydrodipicolinate synthase (292 aa).

Position 45 (Thr-45) interacts with pyruvate. Tyr-134 (proton donor/acceptor) is an active-site residue. The active-site Schiff-base intermediate with substrate is Lys-162. Residue Val-204 participates in pyruvate binding.

It belongs to the DapA family. In terms of assembly, homotetramer; dimer of dimers.

It localises to the cytoplasm. It carries out the reaction L-aspartate 4-semialdehyde + pyruvate = (2S,4S)-4-hydroxy-2,3,4,5-tetrahydrodipicolinate + H2O + H(+). It participates in amino-acid biosynthesis; L-lysine biosynthesis via DAP pathway; (S)-tetrahydrodipicolinate from L-aspartate: step 3/4. Its function is as follows. Catalyzes the condensation of (S)-aspartate-beta-semialdehyde [(S)-ASA] and pyruvate to 4-hydroxy-tetrahydrodipicolinate (HTPA). This chain is 4-hydroxy-tetrahydrodipicolinate synthase, found in Marinobacter nauticus (strain ATCC 700491 / DSM 11845 / VT8) (Marinobacter aquaeolei).